A 278-amino-acid polypeptide reads, in one-letter code: Probable cytochrome c oxidase subunit 3 (278 aa).

Transmembrane regions (helical) follow at residues 21–41 (PWPI…ISSM), 46–66 (FNMY…YSWW), 89–109 (IGMV…FASF), 174–194 (CVTA…MQVY), 212–232 (FYLA…FLIV), and 256–276 (AWYW…VYIL).

Belongs to the cytochrome c oxidase subunit 3 family.

It is found in the cell membrane. The catalysed reaction is 4 Fe(II)-[cytochrome c] + O2 + 8 H(+)(in) = 4 Fe(III)-[cytochrome c] + 2 H2O + 4 H(+)(out). In Rickettsia prowazekii (strain Madrid E), this protein is Probable cytochrome c oxidase subunit 3 (ctaE).